Consider the following 276-residue polypeptide: NAD kinase (276 aa).

Residue aspartate 68 is the Proton acceptor of the active site. NAD(+) is bound by residues 68–69 (DG), arginine 73, 138–139 (NE), lysine 149, aspartate 168, 179–184 (TAYSLS), and glutamine 237.

The protein belongs to the NAD kinase family. A divalent metal cation is required as a cofactor.

The protein resides in the cytoplasm. The catalysed reaction is NAD(+) + ATP = ADP + NADP(+) + H(+). Functionally, involved in the regulation of the intracellular balance of NAD and NADP, and is a key enzyme in the biosynthesis of NADP. Catalyzes specifically the phosphorylation on 2'-hydroxyl of the adenosine moiety of NAD to yield NADP. This chain is NAD kinase, found in Methanopyrus kandleri (strain AV19 / DSM 6324 / JCM 9639 / NBRC 100938).